Here is a 254-residue protein sequence, read N- to C-terminus: Chalcone isomerase cfoK (254 aa).

Active-site residues include H33 and Y50.

The enzyme catalyses a chalcone = a flavanone.. The protein operates within secondary metabolite biosynthesis; flavonoid biosynthesis. Chalcone isomerase; part of the gene cluster that mediates the biosynthesis of chlorflavonin, a fungal flavonoid with acetolactate synthase inhibitory activity. Within the pathway, cfoK acts as chalcone isomerase (CHI), the key enzyme responsible for the tricyclic formation of flavanone through Michael-type intramolecular cyclization of chalcone. The hydrogen at C2'-OH is extracted by the imidazole ring of His-33, which induces the oxa-Michael addition to form the intermediate enolate through 6-endo-trig mode cyclization. The enolate can then be stabilized by a hydrogen bond with the Tyr-50 residue. Following enol tautomerization, the C ring, a gamma-pyranone ring, is formed. The pathway begins with the PKS-NRPS hybrid synthetase cfoA that uses benzoic acid or p-hydroxybenzoic acid as a starter unit with four rounds of chain elongation using malonyl-CoA to form the chalcone skeleton. Then, a new type of chalcone isomerase, cfoK, catalyzes the conversion of the chalcone into a flavanone by a histidine-mediated oxa-Michael addition mechanism. The desaturation of flavanone to flavone is catalyzed by a new type of flavone synthase, the flavin mononucleotide (FMN)-dependent oxidoreductase cfoJ. Monooxygenases cfoF, cfoG, and P450 cfoH are responsible for the hydroxylation of the flavonoid skeleton at sites C3, C8, and C2', respectively. Like cfoF, the dehydratase cfoI plays also a role in the hydroxylation of position C3. Methyltransferases cfoB, cfoC, and cfoD then catalyze the methylation of C7-OH, C8-OH, and C3-OH, respectively. Finally, the monooxygenase cfoE is responsible for the chlorination of flavonoid at position C3'. The sequence is that of Chalcone isomerase cfoK from Aspergillus candidus.